Consider the following 511-residue polypeptide: Pancreatic alpha-amylase (511 aa).

The signal sequence occupies residues 1-15; sequence MKLFLLLSAFGFCWA. Glutamine 16 carries the post-translational modification Pyrrolidone carboxylic acid. 3 cysteine pairs are disulfide-bonded: cysteine 43–cysteine 101, cysteine 85–cysteine 130, and cysteine 156–cysteine 175. Ca(2+) contacts are provided by asparagine 115, arginine 173, and aspartate 182. Arginine 210 contributes to the chloride binding site. Residue aspartate 212 is the Nucleophile of the active site. Histidine 216 lines the Ca(2+) pocket. The active-site Proton donor is glutamate 248. Chloride-binding residues include asparagine 313 and arginine 352. Cysteine 393 and cysteine 399 form a disulfide bridge. Residue asparagine 427 is glycosylated (N-linked (GlcNAc...) asparagine). A disulfide bridge links cysteine 465 with cysteine 477.

This sequence belongs to the glycosyl hydrolase 13 family. Binds to the sea anemone inhibitor helianthamide and magnificamide. The cofactor is Ca(2+). Requires chloride as cofactor.

The protein resides in the secreted. The protein localises to the extracellular space. The catalysed reaction is Endohydrolysis of (1-&gt;4)-alpha-D-glucosidic linkages in polysaccharides containing three or more (1-&gt;4)-alpha-linked D-glucose units.. The chain is Pancreatic alpha-amylase (AMY2) from Sus scrofa (Pig).